Consider the following 215-residue polypeptide: NADH-quinone oxidoreductase subunit C (215 aa).

The protein belongs to the complex I 30 kDa subunit family. As to quaternary structure, NDH-1 is composed of 14 different subunits. Subunits NuoB, C, D, E, F, and G constitute the peripheral sector of the complex.

It localises to the cell inner membrane. It catalyses the reaction a quinone + NADH + 5 H(+)(in) = a quinol + NAD(+) + 4 H(+)(out). In terms of biological role, NDH-1 shuttles electrons from NADH, via FMN and iron-sulfur (Fe-S) centers, to quinones in the respiratory chain. The immediate electron acceptor for the enzyme in this species is believed to be ubiquinone. Couples the redox reaction to proton translocation (for every two electrons transferred, four hydrogen ions are translocated across the cytoplasmic membrane), and thus conserves the redox energy in a proton gradient. This is NADH-quinone oxidoreductase subunit C from Dinoroseobacter shibae (strain DSM 16493 / NCIMB 14021 / DFL 12).